Here is a 512-residue protein sequence, read N- to C-terminus: Endo-1,4-beta-xylanase A (512 aa).

The signal sequence occupies residues 1 to 30 (MKRKVKKMAAMATSIIMAIMIILHSIPVLA). Residues 33–228 (IIYDNETGTH…SSGYANVYKN (196 aa)) enclose the GH11 domain. Catalysis depends on Glu-124, which acts as the Nucleophile. The active-site Proton donor is the Glu-215. 2 CBM6 domains span residues 251–371 (SIIE…FIFS) and 388–508 (SIIQ…FVFS). Residues Glu-254 and Glu-256 each contribute to the Ca(2+) site. Thr-271 is a D-xylotriose binding site. Arg-276 lines the Ca(2+) pocket. The stretch at 279–340 (GYIENGNTVT…SSTGSWNTYQ (62 aa)) is repeat 1. A 2 X 61 AA approximate repeats region spans residues 279-477 (GYIENGNTVT…GSTGSFDTYR (199 aa)). Residues Tyr-280, Asn-337, and Asn-364 each contribute to the D-xylotriose site. D-xylobiose contacts are provided by Tyr-280, Asn-337, and Asn-364. Ca(2+) contacts are provided by Asp-366, Gln-391, Glu-393, and Ser-413. Copy 2 of the repeat occupies 416 to 477 (GYIENGYSTT…GSTGSFDTYR (62 aa)). D-xylotriose-binding residues include Tyr-417, Asp-474, and Asn-501. Position 503 (Asp-503) interacts with Ca(2+).

It belongs to the glycosyl hydrolase 11 (cellulase G) family.

The enzyme catalyses Endohydrolysis of (1-&gt;4)-beta-D-xylosidic linkages in xylans.. The protein operates within glycan degradation; xylan degradation. The protein is Endo-1,4-beta-xylanase A (xynA) of Thermoclostridium stercorarium (Clostridium stercorarium).